The primary structure comprises 194 residues: Fe/S biogenesis protein NfuA (194 aa).

The [4Fe-4S] cluster site is built by cysteine 152 and cysteine 155.

It belongs to the NfuA family. Homodimer. [4Fe-4S] cluster is required as a cofactor.

Involved in iron-sulfur cluster biogenesis. Binds a 4Fe-4S cluster, can transfer this cluster to apoproteins, and thereby intervenes in the maturation of Fe/S proteins. Could also act as a scaffold/chaperone for damaged Fe/S proteins. The protein is Fe/S biogenesis protein NfuA of Pseudomonas putida (strain GB-1).